The chain runs to 436 residues: Prenyltransferase nscD (436 aa).

It belongs to the tryptophan dimethylallyltransferase family.

Its pathway is secondary metabolite biosynthesis. Its function is as follows. Prenyltransferase; part of the gene cluster that mediates the biosynthesis of neosartoricin B, a prenylated anthracenone that probably exhibits T-cell antiproliferative activity, suggestive of a physiological role as an immunosuppressive agent. The non-reducing polyketide synthase nscA probably synthesizes and cyclizes the decaketide backbone. The hydrolase nscB then mediates the product release through hydrolysis followed by spontaneous decarboxylation. The prenyltransferase nscD catalyzes the addition of the dimethylallyl group to the aromatic C5. The FAD-dependent monooxygenase nscC is then responsible for the stereospecific hydroxylation at C2. Neosartoricin B can be converted into two additional compounds neosartoricins C and D. Neosartoricin C is a spirocyclic compound that is cyclized through the attack of C3 hydroxyl on C14, followed by dehydration. On the other hand, neosartoricin D is a further cyclized compound in which attack of C2 on C14 in neosartoricin C results in the formation of the acetal-containing dioxabicyclo-octanone ring. Both of these compounds are novel and possibly represent related metabolites of the gene cluster. This Arthroderma benhamiae (strain ATCC MYA-4681 / CBS 112371) (Trichophyton mentagrophytes) protein is Prenyltransferase nscD.